The sequence spans 274 residues: Penicillin-insensitive murein endopeptidase (274 aa).

The first 19 residues, 1-19 (MKKTAIALLAWFVSSASLA), serve as a signal peptide directing secretion. 3 disulfide bridges follow: Cys-44–Cys-265, Cys-187–Cys-235, and Cys-216–Cys-223. Zn(2+) contacts are provided by His-110, His-113, Asp-120, Asp-147, His-150, and His-211. Residues 225-274 (DQPLPPPGDGCGAELQSWFEPPKLGTTKPEKKTPPPLPPSCQALLDEHVL) form a disordered region.

This sequence belongs to the peptidase M74 family. Dimer. Zn(2+) is required as a cofactor.

The protein localises to the periplasm. Its function is as follows. Murein endopeptidase that cleaves the D-alanyl-meso-2,6-diamino-pimelyl amide bond that connects peptidoglycan strands. Likely plays a role in the removal of murein from the sacculus. This chain is Penicillin-insensitive murein endopeptidase, found in Salmonella paratyphi B (strain ATCC BAA-1250 / SPB7).